Reading from the N-terminus, the 230-residue chain is Acyl-protein thioesterase 1 (230 aa).

Catalysis depends on charge relay system residues Ser-119, Asp-174, and His-208. Residue Lys-224 is modified to N6-acetyllysine.

This sequence belongs to the AB hydrolase superfamily. AB hydrolase 2 family. In terms of assembly, homodimer. Platelets.

It is found in the cytoplasm. It localises to the cell membrane. The protein localises to the nucleus membrane. The protein resides in the endoplasmic reticulum. The catalysed reaction is S-hexadecanoyl-L-cysteinyl-[protein] + H2O = L-cysteinyl-[protein] + hexadecanoate + H(+). The enzyme catalyses 1-hexadecanoyl-sn-glycero-3-phosphocholine + H2O = sn-glycerol 3-phosphocholine + hexadecanoate + H(+). It carries out the reaction a 1-(9Z-octadecenoyl)-2-acyl-sn-glycero-3-phosphocholine + H2O = a 2-acyl-sn-glycero-3-phosphocholine + (9Z)-octadecenoate + H(+). With respect to regulation, inhibited by palmostatin-B, leading to impair depalmitoylating of Ras. Its function is as follows. Acts as an acyl-protein thioesterase. Hydrolyzes fatty acids from S-acylated cysteine residues in proteins such as trimeric G alpha proteins or HRAS. Acts as a palmitoyl thioesterase that catalyzes depalmitoylation of proteins, such as ADRB2, KCNMA1 and SQSTM1. Acts as a negative regulator of autophagy by mediating palmitoylation of SQSTM1, decreasing affinity between SQSTM1 and ATG8 proteins and recruitment of ubiquitinated cargo proteins to autophagosomes. Acts as a lysophospholipase and hydrolyzes lysophosphatidylcholine (lyso-PC). Also hydrolyzes lysophosphatidylethanolamine (lyso-PE), lysophosphatidylinositol (lyso-PI) and lysophosphatidylserine (lyso-PS). Has much higher thioesterase activity than lysophospholipase activity. Contributes to the production of lysophosphatidic acid (LPA) during blood coagulation by recognizing and cleaving plasma phospholipids to generate lysophospholipids which in turn act as substrates for ENPP2 to produce LPA. The polypeptide is Acyl-protein thioesterase 1 (LYPLA1) (Homo sapiens (Human)).